A 266-amino-acid chain; its full sequence is Hydroxyethylthiazole kinase (266 aa).

Methionine 43 contributes to the substrate binding site. Arginine 119 and threonine 166 together coordinate ATP. Substrate is bound at residue glycine 193.

Belongs to the Thz kinase family. The cofactor is Mg(2+).

It carries out the reaction 5-(2-hydroxyethyl)-4-methylthiazole + ATP = 4-methyl-5-(2-phosphooxyethyl)-thiazole + ADP + H(+). Its pathway is cofactor biosynthesis; thiamine diphosphate biosynthesis; 4-methyl-5-(2-phosphoethyl)-thiazole from 5-(2-hydroxyethyl)-4-methylthiazole: step 1/1. In terms of biological role, catalyzes the phosphorylation of the hydroxyl group of 4-methyl-5-beta-hydroxyethylthiazole (THZ). This chain is Hydroxyethylthiazole kinase, found in Methanococcus maripaludis (strain C6 / ATCC BAA-1332).